Here is a 179-residue protein sequence, read N- to C-terminus: Large ribosomal subunit protein uL5 (179 aa).

The protein belongs to the universal ribosomal protein uL5 family. As to quaternary structure, part of the 50S ribosomal subunit; part of the 5S rRNA/L5/L18/L25 subcomplex. Contacts the 5S rRNA and the P site tRNA. Forms a bridge to the 30S subunit in the 70S ribosome.

In terms of biological role, this is one of the proteins that bind and probably mediate the attachment of the 5S RNA into the large ribosomal subunit, where it forms part of the central protuberance. In the 70S ribosome it contacts protein S13 of the 30S subunit (bridge B1b), connecting the 2 subunits; this bridge is implicated in subunit movement. Contacts the P site tRNA; the 5S rRNA and some of its associated proteins might help stabilize positioning of ribosome-bound tRNAs. In Vesicomyosocius okutanii subsp. Calyptogena okutanii (strain HA), this protein is Large ribosomal subunit protein uL5.